Here is a 338-residue protein sequence, read N- to C-terminus: ATPase GET3 (338 aa).

Residue 33 to 40 (KGGVGKTT) coordinates ATP. The active site involves Asp62. ATP-binding residues include Glu242 and Asn269. Zn(2+) contacts are provided by Cys280 and Cys283.

Belongs to the arsA ATPase family. As to quaternary structure, homodimer.

The protein localises to the cytoplasm. The protein resides in the endoplasmic reticulum. In terms of biological role, ATPase required for the post-translational delivery of tail-anchored (TA) proteins to the endoplasmic reticulum. Recognizes and selectively binds the transmembrane domain of TA proteins in the cytosol. This complex then targets to the endoplasmic reticulum by membrane-bound receptors, where the tail-anchored protein is released for insertion. This process is regulated by ATP binding and hydrolysis. ATP binding drives the homodimer towards the closed dimer state, facilitating recognition of newly synthesized TA membrane proteins. ATP hydrolysis is required for insertion. Subsequently, the homodimer reverts towards the open dimer state, lowering its affinity for the membrane-bound receptor, and returning it to the cytosol to initiate a new round of targeting. In Uncinocarpus reesii (strain UAMH 1704), this protein is ATPase GET3.